A 459-amino-acid chain; its full sequence is Putrescine aminotransferase (459 aa).

Pyridoxal 5'-phosphate contacts are provided by residues 150 to 151 and Gln274; that span reads GT. Lys300 is modified (N6-(pyridoxal phosphate)lysine). A pyridoxal 5'-phosphate-binding site is contributed by Thr332.

It belongs to the class-III pyridoxal-phosphate-dependent aminotransferase family. Putrescine aminotransferase subfamily. It depends on pyridoxal 5'-phosphate as a cofactor.

It catalyses the reaction an alkane-alpha,omega-diamine + 2-oxoglutarate = an omega-aminoaldehyde + L-glutamate. The catalysed reaction is putrescine + 2-oxoglutarate = 1-pyrroline + L-glutamate + H2O. It carries out the reaction cadaverine + 2-oxoglutarate = 5-aminopentanal + L-glutamate. The protein operates within amine and polyamine degradation; putrescine degradation; 4-aminobutanal from putrescine (transaminase route): step 1/1. Catalyzes the aminotransferase reaction from putrescine to 2-oxoglutarate, leading to glutamate and 4-aminobutanal, which spontaneously cyclizes to form 1-pyrroline. This is the first step in one of two pathways for putrescine degradation, where putrescine is converted into 4-aminobutanoate (gamma-aminobutyrate or GABA) via 4-aminobutanal. Also functions as a cadaverine transaminase in a a L-lysine degradation pathway to succinate that proceeds via cadaverine, glutarate and L-2-hydroxyglutarate. This is Putrescine aminotransferase from Escherichia coli (strain SMS-3-5 / SECEC).